A 511-amino-acid polypeptide reads, in one-letter code: ATP synthase subunit alpha (511 aa).

169–176 (GDRQTGKT) lines the ATP pocket.

It belongs to the ATPase alpha/beta chains family. In terms of assembly, F-type ATPases have 2 components, CF(1) - the catalytic core - and CF(0) - the membrane proton channel. CF(1) has five subunits: alpha(3), beta(3), gamma(1), delta(1), epsilon(1). CF(0) has three main subunits: a(1), b(2) and c(9-12). The alpha and beta chains form an alternating ring which encloses part of the gamma chain. CF(1) is attached to CF(0) by a central stalk formed by the gamma and epsilon chains, while a peripheral stalk is formed by the delta and b chains.

It localises to the cell inner membrane. The catalysed reaction is ATP + H2O + 4 H(+)(in) = ADP + phosphate + 5 H(+)(out). Its function is as follows. Produces ATP from ADP in the presence of a proton gradient across the membrane. The alpha chain is a regulatory subunit. The polypeptide is ATP synthase subunit alpha (Bartonella quintana (strain Toulouse) (Rochalimaea quintana)).